The primary structure comprises 300 residues: MKQITIASRESKLALWQTNFVKNRIQLELNIPCEISTMKTQGDIILDQPLNKIGGKALFMKELEVAMLSNKADIAVHSLKDVPYQLPQGFCLAGFMPREDPRDAFVSNKYNSIDDLPKGAVVGTSSLRRKAQLLHYRDDLEIRDLRGNIQTRLSKLDNGDYDAIILASAGLIRLELVERITQFIPVEISLPAVGQGIVVIEALERDNDLLEKIQKLNCRESSRVATAERAFNQELKGGCHVAIGAYAELDNNQITLMAMVASSDGKKILKRKMIGDDPTKLGKLLAQEMIALGAYKILES.

C239 carries the post-translational modification S-(dipyrrolylmethanemethyl)cysteine.

Belongs to the HMBS family. Monomer. Requires dipyrromethane as cofactor.

The catalysed reaction is 4 porphobilinogen + H2O = hydroxymethylbilane + 4 NH4(+). Its pathway is porphyrin-containing compound metabolism; protoporphyrin-IX biosynthesis; coproporphyrinogen-III from 5-aminolevulinate: step 2/4. In terms of biological role, tetrapolymerization of the monopyrrole PBG into the hydroxymethylbilane pre-uroporphyrinogen in several discrete steps. The protein is Porphobilinogen deaminase of Francisella tularensis subsp. tularensis (strain FSC 198).